The primary structure comprises 255 residues: Malonyl-[acyl-carrier protein] O-methyltransferase (255 aa).

The protein belongs to the methyltransferase superfamily.

The enzyme catalyses malonyl-[ACP] + S-adenosyl-L-methionine = malonyl-[ACP] methyl ester + S-adenosyl-L-homocysteine. It functions in the pathway cofactor biosynthesis; biotin biosynthesis. Converts the free carboxyl group of a malonyl-thioester to its methyl ester by transfer of a methyl group from S-adenosyl-L-methionine (SAM). It allows to synthesize pimeloyl-ACP via the fatty acid synthetic pathway. In Acinetobacter baylyi (strain ATCC 33305 / BD413 / ADP1), this protein is Malonyl-[acyl-carrier protein] O-methyltransferase.